The chain runs to 155 residues: 6,7-dimethyl-8-ribityllumazine synthase (155 aa).

5-amino-6-(D-ribitylamino)uracil is bound by residues phenylalanine 23, alanine 57–glutamate 59, and alanine 81–isoleucine 83. Serine 86–threonine 87 is a binding site for (2S)-2-hydroxy-3-oxobutyl phosphate. Catalysis depends on histidine 89, which acts as the Proton donor. Residue phenylalanine 114 coordinates 5-amino-6-(D-ribitylamino)uracil. Position 128 (arginine 128) interacts with (2S)-2-hydroxy-3-oxobutyl phosphate.

The protein belongs to the DMRL synthase family.

It carries out the reaction (2S)-2-hydroxy-3-oxobutyl phosphate + 5-amino-6-(D-ribitylamino)uracil = 6,7-dimethyl-8-(1-D-ribityl)lumazine + phosphate + 2 H2O + H(+). It functions in the pathway cofactor biosynthesis; riboflavin biosynthesis; riboflavin from 2-hydroxy-3-oxobutyl phosphate and 5-amino-6-(D-ribitylamino)uracil: step 1/2. Catalyzes the formation of 6,7-dimethyl-8-ribityllumazine by condensation of 5-amino-6-(D-ribitylamino)uracil with 3,4-dihydroxy-2-butanone 4-phosphate. This is the penultimate step in the biosynthesis of riboflavin. The sequence is that of 6,7-dimethyl-8-ribityllumazine synthase from Geobacter metallireducens (strain ATCC 53774 / DSM 7210 / GS-15).